Here is a 311-residue protein sequence, read N- to C-terminus: Malate dehydrogenase (311 aa).

NAD(+) is bound by residues 7 to 13 and Asp-34; that span reads GAAGGIG. Residues Arg-81 and Arg-87 each contribute to the substrate site. NAD(+)-binding positions include Asn-94 and 117–119; that span reads ITN. 2 residues coordinate substrate: Asn-119 and Arg-153. His-177 serves as the catalytic Proton acceptor. Met-227 is an NAD(+) binding site.

Belongs to the LDH/MDH superfamily. MDH type 1 family. In terms of assembly, homodimer.

It carries out the reaction (S)-malate + NAD(+) = oxaloacetate + NADH + H(+). Functionally, catalyzes the reversible oxidation of malate to oxaloacetate. This chain is Malate dehydrogenase, found in Haemophilus influenzae (strain PittEE).